Consider the following 610-residue polypeptide: UvrABC system protein C (610 aa).

Residues Ser-16–Val-94 enclose the GIY-YIG domain. The 36-residue stretch at Asp-204 to Val-239 folds into the UVR domain.

This sequence belongs to the UvrC family. In terms of assembly, interacts with UvrB in an incision complex.

It is found in the cytoplasm. Its function is as follows. The UvrABC repair system catalyzes the recognition and processing of DNA lesions. UvrC both incises the 5' and 3' sides of the lesion. The N-terminal half is responsible for the 3' incision and the C-terminal half is responsible for the 5' incision. The chain is UvrABC system protein C from Salmonella schwarzengrund (strain CVM19633).